The following is a 386-amino-acid chain: O-phospho-L-seryl-tRNA:Cys-tRNA synthase (386 aa).

Pyridoxal 5'-phosphate contacts are provided by residues 89–90, Asn-196, and 219–221; these read AR and SGH. At Lys-222 the chain carries N6-(pyridoxal phosphate)lysine.

It belongs to the SepCysS family. As to quaternary structure, homodimer. Interacts with SepRS. Pyridoxal 5'-phosphate serves as cofactor.

The enzyme catalyses O-phospho-L-seryl-tRNA(Cys) + hydrogen sulfide + H(+) = L-cysteinyl-tRNA(Cys) + phosphate. Its function is as follows. Converts O-phospho-L-seryl-tRNA(Cys) (Sep-tRNA(Cys)) to L-cysteinyl-tRNA(Cys) (Cys-tRNA(Cys)). The polypeptide is O-phospho-L-seryl-tRNA:Cys-tRNA synthase (Methanosarcina acetivorans (strain ATCC 35395 / DSM 2834 / JCM 12185 / C2A)).